Here is a 123-residue protein sequence, read N- to C-terminus: Small ribosomal subunit protein uS12c (123 aa).

The segment covering 1–20 (MPTIQQLIRNTRQPTQNRTK) has biased composition (polar residues). A disordered region spans residues 1–27 (MPTIQQLIRNTRQPTQNRTKSPALKAC).

This sequence belongs to the universal ribosomal protein uS12 family. In terms of assembly, part of the 30S ribosomal subunit.

Its subcellular location is the plastid. It localises to the chloroplast. Functionally, with S4 and S5 plays an important role in translational accuracy. Located at the interface of the 30S and 50S subunits. The chain is Small ribosomal subunit protein uS12c (rps12) from Zygnema circumcarinatum (Green alga).